The sequence spans 162 residues: tRNA (cytidine(34)-2'-O)-methyltransferase (162 aa).

S-adenosyl-L-methionine contacts are provided by Leu83, Gly105, Ile127, and Ser135.

This sequence belongs to the class IV-like SAM-binding methyltransferase superfamily. RNA methyltransferase TrmH family. TrmL subfamily. As to quaternary structure, homodimer.

It localises to the cytoplasm. It carries out the reaction cytidine(34) in tRNA + S-adenosyl-L-methionine = 2'-O-methylcytidine(34) in tRNA + S-adenosyl-L-homocysteine + H(+). It catalyses the reaction 5-carboxymethylaminomethyluridine(34) in tRNA(Leu) + S-adenosyl-L-methionine = 5-carboxymethylaminomethyl-2'-O-methyluridine(34) in tRNA(Leu) + S-adenosyl-L-homocysteine + H(+). Functionally, methylates the ribose at the nucleotide 34 wobble position in the two leucyl isoacceptors tRNA(Leu)(CmAA) and tRNA(Leu)(cmnm5UmAA). Catalyzes the methyl transfer from S-adenosyl-L-methionine to the 2'-OH of the wobble nucleotide. This chain is tRNA (cytidine(34)-2'-O)-methyltransferase, found in Photorhabdus asymbiotica subsp. asymbiotica (strain ATCC 43949 / 3105-77) (Xenorhabdus luminescens (strain 2)).